Here is a 305-residue protein sequence, read N- to C-terminus: Probable 5-dehydro-4-deoxyglucarate dehydratase (305 aa).

The protein belongs to the DapA family.

It carries out the reaction 5-dehydro-4-deoxy-D-glucarate + H(+) = 2,5-dioxopentanoate + CO2 + H2O. The protein operates within carbohydrate acid metabolism; D-glucarate degradation; 2,5-dioxopentanoate from D-glucarate: step 2/2. The polypeptide is Probable 5-dehydro-4-deoxyglucarate dehydratase (Xanthomonas campestris pv. campestris (strain B100)).